The following is a 3414-amino-acid chain: Hemocyanin 1 (3414 aa).

Positions 1–16 (MLSVRLLIVVLALANA) are cleaved as a signal peptide. Glu17 contacts a divalent metal cation. The tract at residues 17–437 (ENLVRKSVEH…PPVKHHQSAN (421 aa)) is functional unit a (wall). Cu cation is bound at residue His58. A disulfide bond links Cys64 and Cys73. Residues 74–76 (CIH) constitute a cross-link (2'-(S-cysteinyl)-histidine (Cys-His)). 5 residues coordinate Cu cation: His76, His85, His195, His199, and His226. The cysteines at positions 185 and 252 are disulfide-linked. Residues 287–290 (CELH) constitute a cross-link (2'-(S-cysteinyl)-histidine (Cys-His)). Cys339 and Cys351 are disulfide-bonded. Residue Asn403 is glycosylated (N-linked (GlcNAc...) asparagine). Positions 438–851 (LLVRKNINDL…RVKFDKVPRS (414 aa)) are functional unit b (wall). Cu cation is bound at residue His478. The cysteines at positions 484 and 495 are disulfide-linked. Residues 496-498 (CVH) constitute a cross-link (2'-(S-cysteinyl)-histidine (Cys-His)). Residues His498 and His507 each coordinate Cu cation. N-linked (GlcNAc...) asparagine glycosylation occurs at Asn545. Cys608 and Cys674 are disulfide-bonded. Residues His618, His622, and His649 each coordinate Cu cation. One copy of the WD 1 repeat lies at 628-669 (SEHFSMSSLHYTAFDPLFYFHHSNVDRLWAVWQALQMRRHKP). Glu737 is an a divalent metal cation binding site. The tract at residues 852–1271 (RLIRKNVDRL…EVYQAEVTSA (420 aa)) is functional unit c (wall). His892 serves as a coordination point for Cu cation. An intrachain disulfide couples Cys898 to Cys909. A cross-link (2'-(S-cysteinyl)-histidine (Cys-His)) is located at residues 910–912 (CVH). Residues His912, His921, His1031, His1035, and His1062 each coordinate Cu cation. 2 disulfide bridges follow: Cys1021–Cys1088 and Cys1178–Cys1184. The WD 2 repeat unit spans residues 1041–1082 (AQPYGMASLRYTAFDPLFYLHHSNTDRIWAIWQALQKYRGKP). The interval 1272-1680 (NRIRKNIENL…AHTDDGHTEP (409 aa)) is functional unit d (wall). His1309 contacts Cu cation. The cysteines at positions 1315 and 1324 are disulfide-linked. Residues 1325-1327 (CVH) constitute a cross-link (2'-(S-cysteinyl)-histidine (Cys-His)). Residues His1327, His1336, His1440, His1444, and His1471 each contribute to the Cu cation site. 2 disulfides stabilise this stretch: Cys1430/Cys1497 and Cys1585/Cys1595. The stretch at 1450-1491 (KGKYSMSNLDYAAFDPVFFLHHATTDRIWAIWQDLQRFRKRP) is one WD 3 repeat. An N-linked (GlcNAc...) asparagine glycan is attached at Asn1648. Residues 1681–2097 (VMIRKDITQL…HDISSHHLSL (417 aa)) form a functional unit e (wall) region. His1721 contributes to the Cu cation binding site. Cys1727 and Cys1738 are oxidised to a cystine. The segment at residues 1739–1741 (CVH) is a cross-link (2'-(S-cysteinyl)-histidine (Cys-His)). Cu cation is bound by residues His1741, His1750, His1863, His1867, and His1894. Intrachain disulfides connect Cys1853-Cys1920 and Cys2009-Cys2015. Residues 1873–1914 (KEPYGIGHLHYASYDPLFYIHHSQTDRIWAIWQSLQRFRGLS) form a WD 4 repeat. The segment at 2098-2517 (NKVRHDLSTL…EDHHSSSMAG (420 aa)) is functional unit f (wall). His2138 is a Cu cation binding site. A disulfide bridge links Cys2144 with Cys2154. N-linked (GlcNAc...) asparagine glycosylation occurs at Asn2145. The segment at residues 2155–2157 (CIH) is a cross-link (2'-(S-cysteinyl)-histidine (Cys-His)). The Cu cation site is built by His2157, His2166, His2276, His2280, and His2307. The stretch at 2163–2199 (PHWHRLYTLQFEQALRRHGSSVAVPYWDWTKPIHNIP) is one WD 5 repeat. 2 disulfide bridges follow: Cys2266/Cys2333 and Cys2420/Cys2426. Residue Glu2424 participates in a divalent metal cation binding. A functional unit g (internal arc) region spans residues 2518 to 2921 (HGVRKEINTL…EKHHEDHHED (404 aa)). Residue His2558 coordinates Cu cation. Cysteines 2564 and 2574 form a disulfide. The N-linked (GlcNAc...) asparagine glycan is linked to Asn2571. Positions 2575–2577 (CTH) form a cross-link, 2'-(S-cysteinyl)-histidine (Cys-His). His2577, His2586, His2686, His2690, and His2717 together coordinate Cu cation. 2 disulfides stabilise this stretch: Cys2676-Cys2743 and Cys2830-Cys2836. The stretch at 2696-2737 (LTPYGMSTLEYTTYDPLFWLHHANTDRIWAIWQALQEYRGLP) is one WD 6 repeat. The segment at 2922 to 3414 (ILVRKNIHSL…LRIHVHVDDE (493 aa)) is functional unit h (internal slab). Position 2962 (His2962) interacts with Cu cation. A disulfide bridge links Cys2968 with Cys2978. The 2'-(S-cysteinyl)-histidine (Cys-His) cross-link spans 2979-2981 (CVH). Cu cation-binding residues include His2981, His2990, His3091, His3095, and His3122. Cysteines 3081 and 3148 form a disulfide. One copy of the WD 7 repeat lies at 3101–3142 (AEKYSMSTLEYSAFDPYFMIHHASLDKIWIIWQELQKRRVKP). N-linked (GlcNAc...) asparagine glycosylation occurs at Asn3278. The cysteines at positions 3367 and 3400 are disulfide-linked.

This sequence belongs to the tyrosinase family. Hemocyanin subfamily. As to quaternary structure, homo-didecamer, with two decamers assembled face-to-face at their open ends. This didecamer form a stable 25 nM cylinder wall. In terms of processing, probably N-glycosylated. Asn-1280 and Asn-2484 are buried deeply in the protein which make them inaccessible for sugar attachment. Asn-3278 N-glycan is likely to represent a diantennate carbohydrate tree. The didecamer is almost evenly tagged by a total of 120 sugar trees. As to expression, hemolymph.

Its subcellular location is the secreted. It localises to the extracellular space. Functionally, hemocyanins are copper-containing oxygen carriers occurring freely dissolved in the hemolymph of many mollusks and arthropods. The chain is Hemocyanin 1 from Megathura crenulata (Giant keyhole limpet).